A 1446-amino-acid chain; its full sequence is Centrosomal protein of 164 kDa (1446 aa).

Residues 1–195 form an interaction with ATRIP region; sequence MARRPILLGD…PPQGLKAAAC (195 aa). The region spanning 56 to 89 is the WW domain; it reads APLPKGWKPCQNITGDLYYFNFDTGQSIWDHPCD. Disordered regions lie at residues 106–132 and 159–185; these read PGAI…SKSP and PPSA…EPTL. A compositionally biased stretch (basic residues) spans 109-121; sequence IKKKDKKKKKEKK. A compositionally biased stretch (polar residues) spans 164–176; sequence RGSQSVSLGSSAD. Ser-202 carries the phosphoserine modification. Disordered regions lie at residues 217-238, 250-408, 424-570, and 830-849; these read EETN…SSEL, GGNF…SFLG, GDTL…EPAA, and KRQE…KEEH. Acidic residues predominate over residues 218 to 228; it reads ETNEEDEEESD. A compositionally biased stretch (basic and acidic residues) spans 257–277; that stretch reads ESPRTSQPDKKDVSLDSDADR. Residues 288–312 are compositionally biased toward polar residues; the sequence is GADSSVASANGSKSQGRGASPWNPQ. 2 stretches are compositionally biased toward basic and acidic residues: residues 355-372 and 384-397; these read KEGE…KEAS and SEIH…RHSG. Residues 451 to 461 are compositionally biased toward polar residues; the sequence is SSIAEPQSKHT. 2 stretches are compositionally biased toward basic and acidic residues: residues 490–499 and 525–534; these read PEWKEAEGPG and ERAEEKHSQA. Residues 1143–1197 adopt a coiled-coil conformation; it reads EVLGNMRKNLNEETRHLDEMKSAMRKGHDLLKKKEEKLIQLESSLQEEVSDEDTL. The disordered stretch occupies residues 1261–1287; the sequence is LGSLNSQPPPQGLGSQPPPPLFTSSLR. A compositionally biased stretch (pro residues) spans 1267–1281; it reads QPPPQGLGSQPPPPL. 2 positions are modified to phosphoserine: Ser-1369 and Ser-1371.

As to quaternary structure, interacts (via N-terminus) with ATRIP. Interacts with ATM, ATR and MDC1. Interacts with XPA (via N-terminus) upon UV irradiation. Interacts with CEP83, CCDC92, TTBK2, DVL3, NPHP3 and weakly with NPHP4. Interacts with DZIP1.

It is found in the cytoplasm. Its subcellular location is the cytoskeleton. It localises to the microtubule organizing center. The protein resides in the centrosome. The protein localises to the centriole. It is found in the nucleus. Functionally, plays a role in microtubule organization and/or maintenance for the formation of primary cilia (PC), a microtubule-based structure that protrudes from the surface of epithelial cells. Plays a critical role in G2/M checkpoint and nuclear divisions. A key player in the DNA damage-activated ATR/ATM signaling cascade since it is required for the proper phosphorylation of H2AX, RPA, CHEK2 and CHEK1. Plays a critical role in chromosome segregation, acting as a mediator required for the maintenance of genomic stability through modulation of MDC1, RPA and CHEK1. The chain is Centrosomal protein of 164 kDa from Mus musculus (Mouse).